A 178-amino-acid chain; its full sequence is ATP-dependent protease subunit HslV (178 aa).

Thr-5 is an active-site residue. Residues Ser-161, Cys-164, and Thr-167 each contribute to the Na(+) site.

The protein belongs to the peptidase T1B family. HslV subfamily. As to quaternary structure, a double ring-shaped homohexamer of HslV is capped on each side by a ring-shaped HslU homohexamer. The assembly of the HslU/HslV complex is dependent on binding of ATP.

It localises to the cytoplasm. The enzyme catalyses ATP-dependent cleavage of peptide bonds with broad specificity.. With respect to regulation, allosterically activated by HslU binding. In terms of biological role, protease subunit of a proteasome-like degradation complex believed to be a general protein degrading machinery. The sequence is that of ATP-dependent protease subunit HslV from Syntrophomonas wolfei subsp. wolfei (strain DSM 2245B / Goettingen).